Here is a 306-residue protein sequence, read N- to C-terminus: Zinc finger protein 625 (306 aa).

Residues 31–53 (PRVKSCGEVSVGHASLNRHHRAD) form a C2H2-type 1; degenerate zinc finger. 8 C2H2-type zinc fingers span residues 69-91 (YKCT…EWAH), 97-119 (YDCE…RIMH), 125-147 (YKCN…KRTH), 153-175 (YECK…ERTH), 181-203 (YECS…KITH), 209-231 (YECK…ERTH), 237-259 (YECK…GRTH), and 265-287 (YECK…ERTH). Tyr-209 carries the phosphotyrosine modification. A disordered region spans residues 287-306 (HTGEKPCSSNTSKGQGEKIA).

This sequence belongs to the krueppel C2H2-type zinc-finger protein family.

The protein resides in the nucleus. Its function is as follows. May be involved in transcriptional regulation. This Homo sapiens (Human) protein is Zinc finger protein 625 (ZNF625).